Here is a 90-residue protein sequence, read N- to C-terminus: MLQYRIIVDGRVQGVGFRYFVQMEADKHKLTGWVRNRDDGTVEIRAEGLEESLKQFLKAIQKGSPFSKVTDVKVEETKELDGFQKFNISY.

The Acylphosphatase-like domain occupies 3-90 (QYRIIVDGRV…DGFQKFNISY (88 aa)). Catalysis depends on residues Arg-18 and Asn-36.

This sequence belongs to the acylphosphatase family.

It catalyses the reaction an acyl phosphate + H2O = a carboxylate + phosphate + H(+). The sequence is that of Acylphosphatase (acyP) from Bacillus licheniformis (strain ATCC 14580 / DSM 13 / JCM 2505 / CCUG 7422 / NBRC 12200 / NCIMB 9375 / NCTC 10341 / NRRL NRS-1264 / Gibson 46).